The following is a 126-amino-acid chain: Holo-[acyl-carrier-protein] synthase (126 aa).

Residues D9 and E58 each contribute to the Mg(2+) site.

This sequence belongs to the P-Pant transferase superfamily. AcpS family. Requires Mg(2+) as cofactor.

It localises to the cytoplasm. It catalyses the reaction apo-[ACP] + CoA = holo-[ACP] + adenosine 3',5'-bisphosphate + H(+). Functionally, transfers the 4'-phosphopantetheine moiety from coenzyme A to a Ser of acyl-carrier-protein. This chain is Holo-[acyl-carrier-protein] synthase, found in Shewanella frigidimarina (strain NCIMB 400).